Reading from the N-terminus, the 193-residue chain is MAAIRKKLVIVGDGACGKTCLLIVFSKDQFPEVYVPTVFENYVADIEVDSKQVELALWDTAGQEDYDRLRPLSYPDTDVILMCFSIDSPDSLENIPEKWTPEVKHFCPNVPIILVGNKKDLRNDEHTRRELQKMKQEPVKPEEGRDMANRINAFGYLECSAKTKEGVREVFEMATRAALQAKKRGKKNACALL.

GTP is bound by residues 12–19, 30–37, 59–63, 117–120, and 160–162; these read GDGACGKT, FPEVYVPT, DTAGQ, NKKD, and SAK. Tyr34 is a glycosylation site ((Microbial infection) O-linked (GlcNAc) tyrosine; by Yersinia Afp18). Position 190 is a cysteine methyl ester (Cys190). Residue Cys190 is the site of S-geranylgeranyl cysteine attachment. Residues 191 to 193 constitute a propeptide, removed in mature form; it reads ALL.

The protein belongs to the small GTPase superfamily. Rho family. Post-translationally, (Microbial infection) Glycosylated at Tyr-34 by Yersinia ruckeri toxin Afp18. Mono-O-GlcNAcylation by Afp18 inhibits RhoA activation by guanine nucleotide exchange factors and blocks RhoA signaling.

The protein resides in the cell membrane. Regulates a signal transduction pathway linking plasma membrane receptors to the assembly of focal adhesions and actin stress fibers. The protein is Rho-related GTP-binding protein RhoA-A of Danio rerio (Zebrafish).